The sequence spans 485 residues: Glutamyl-tRNA(Gln) amidotransferase subunit A (485 aa).

Catalysis depends on charge relay system residues Lys74 and Ser149. Residue Ser173 is the Acyl-ester intermediate of the active site.

This sequence belongs to the amidase family. GatA subfamily. In terms of assembly, heterotrimer of A, B and C subunits.

It catalyses the reaction L-glutamyl-tRNA(Gln) + L-glutamine + ATP + H2O = L-glutaminyl-tRNA(Gln) + L-glutamate + ADP + phosphate + H(+). Allows the formation of correctly charged Gln-tRNA(Gln) through the transamidation of misacylated Glu-tRNA(Gln) in organisms which lack glutaminyl-tRNA synthetase. The reaction takes place in the presence of glutamine and ATP through an activated gamma-phospho-Glu-tRNA(Gln). The polypeptide is Glutamyl-tRNA(Gln) amidotransferase subunit A (Herminiimonas arsenicoxydans).